Consider the following 352-residue polypeptide: Selenide, water dikinase (352 aa).

Cysteine 21 is a catalytic residue. ATP is bound by residues lysine 24 and 51-53 (TND). A Mg(2+)-binding site is contributed by aspartate 54. Residues aspartate 71, aspartate 94, and 141-143 (GHS) each bind ATP. Aspartate 94 serves as a coordination point for Mg(2+). Aspartate 231 contacts Mg(2+).

The protein belongs to the selenophosphate synthase 1 family. Class I subfamily. As to quaternary structure, homodimer. The cofactor is Mg(2+).

It catalyses the reaction hydrogenselenide + ATP + H2O = selenophosphate + AMP + phosphate + 2 H(+). Functionally, synthesizes selenophosphate from selenide and ATP. The polypeptide is Selenide, water dikinase (Myxococcus xanthus (strain DK1622)).